Reading from the N-terminus, the 967-residue chain is Isoleucine--tRNA ligase (967 aa).

Residues 68–78 carry the 'HIGH' region motif; the sequence is PYANGTLHMGH. E583 serves as a coordination point for L-isoleucyl-5'-AMP. Positions 624–628 match the 'KMSKS' region motif; it reads KMSKS. K627 lines the ATP pocket. C937, C940, C957, and C960 together coordinate Zn(2+).

Belongs to the class-I aminoacyl-tRNA synthetase family. IleS type 1 subfamily. Monomer. Requires Zn(2+) as cofactor.

Its subcellular location is the cytoplasm. It catalyses the reaction tRNA(Ile) + L-isoleucine + ATP = L-isoleucyl-tRNA(Ile) + AMP + diphosphate. Its function is as follows. Catalyzes the attachment of isoleucine to tRNA(Ile). As IleRS can inadvertently accommodate and process structurally similar amino acids such as valine, to avoid such errors it has two additional distinct tRNA(Ile)-dependent editing activities. One activity is designated as 'pretransfer' editing and involves the hydrolysis of activated Val-AMP. The other activity is designated 'posttransfer' editing and involves deacylation of mischarged Val-tRNA(Ile). This chain is Isoleucine--tRNA ligase, found in Prochlorococcus marinus (strain NATL2A).